The sequence spans 374 residues: Peptide chain release factor 2 (374 aa).

Q250 carries the N5-methylglutamine modification.

This sequence belongs to the prokaryotic/mitochondrial release factor family. Post-translationally, methylated by PrmC. Methylation increases the termination efficiency of RF2.

The protein resides in the cytoplasm. In terms of biological role, peptide chain release factor 2 directs the termination of translation in response to the peptide chain termination codons UGA and UAA. The polypeptide is Peptide chain release factor 2 (Roseobacter denitrificans (strain ATCC 33942 / OCh 114) (Erythrobacter sp. (strain OCh 114))).